A 149-amino-acid chain; its full sequence is Large ribosomal subunit protein bL9 (149 aa).

It belongs to the bacterial ribosomal protein bL9 family.

Functionally, binds to the 23S rRNA. The protein is Large ribosomal subunit protein bL9 of Mannheimia succiniciproducens (strain KCTC 0769BP / MBEL55E).